A 618-amino-acid chain; its full sequence is Isocitrate dehydrogenase kinase/phosphatase (618 aa).

ATP contacts are provided by residues 332–338 (APGIKGM) and Lys-353. Residue Asp-388 is part of the active site.

This sequence belongs to the AceK family.

It is found in the cytoplasm. It catalyses the reaction L-seryl-[isocitrate dehydrogenase] + ATP = O-phospho-L-seryl-[isocitrate dehydrogenase] + ADP + H(+). Its function is as follows. Bifunctional enzyme which can phosphorylate or dephosphorylate isocitrate dehydrogenase (IDH) on a specific serine residue. This is a regulatory mechanism which enables bacteria to bypass the Krebs cycle via the glyoxylate shunt in response to the source of carbon. When bacteria are grown on glucose, IDH is fully active and unphosphorylated, but when grown on acetate or ethanol, the activity of IDH declines drastically concomitant with its phosphorylation. In Methylibium petroleiphilum (strain ATCC BAA-1232 / LMG 22953 / PM1), this protein is Isocitrate dehydrogenase kinase/phosphatase.